The sequence spans 559 residues: Potassium-transporting ATPase potassium-binding subunit (559 aa).

Helical transmembrane passes span 5–25 (GFLLLASYLLVLLVLARPLGM), 63–83 (LLAILLFNALGGLALFALLML), 131–151 (VGLTVQNFLSAATGIAVVFAL), 173–193 (ITLWLLLPLSLLVALFFIQQG), 254–274 (VQMLAIFLIPTALCFAFGEVV), 282–302 (AILWAMTLIFILCVAVVMWAE), 327–347 (FGILASSLFAVITTAASCGAV), 356–376 (ALGGMVPMWLMQIGEVVFGGV), 379–399 (GLYGMLLFVMLAVFIAGLMVG), 416–436 (MIALAILVTPTLVLLGTALAM), 483–503 (LLLAFCMLVGRFAVIIPVMAI), and 525–545 (ALFIGLLIGTVLLVGALTFIP).

It belongs to the KdpA family. As to quaternary structure, the system is composed of three essential subunits: KdpA, KdpB and KdpC.

It localises to the cell inner membrane. Part of the high-affinity ATP-driven potassium transport (or Kdp) system, which catalyzes the hydrolysis of ATP coupled with the electrogenic transport of potassium into the cytoplasm. This subunit binds the periplasmic potassium ions and delivers the ions to the membrane domain of KdpB through an intramembrane tunnel. This is Potassium-transporting ATPase potassium-binding subunit from Klebsiella pneumoniae subsp. pneumoniae (strain ATCC 700721 / MGH 78578).